We begin with the raw amino-acid sequence, 177 residues long: MSRIGKKPVAIPSGVTANVDGQLISVKGGKGQLSFAAPEDVTVVLGDGGIEVSPRNETKRARAMWGMTRSMVNNLVVGVSKGFERKLEITGVGYKAAVSGKNLQLSLGFSHDVTFPIPDGISIVAAKPTEVAISGIDKRQVGQIASEIRALRPPEPYKGKGVKYAGEFIFRKEGKKK.

This sequence belongs to the universal ribosomal protein uL6 family. Part of the 50S ribosomal subunit.

Its function is as follows. This protein binds to the 23S rRNA, and is important in its secondary structure. It is located near the subunit interface in the base of the L7/L12 stalk, and near the tRNA binding site of the peptidyltransferase center. This is Large ribosomal subunit protein uL6 from Methylocella silvestris (strain DSM 15510 / CIP 108128 / LMG 27833 / NCIMB 13906 / BL2).